Here is a 121-residue protein sequence, read N- to C-terminus: Large ribosomal subunit protein bL12 (121 aa).

This sequence belongs to the bacterial ribosomal protein bL12 family. In terms of assembly, homodimer. Part of the ribosomal stalk of the 50S ribosomal subunit. Forms a multimeric L10(L12)X complex, where L10 forms an elongated spine to which 2 to 4 L12 dimers bind in a sequential fashion. Binds GTP-bound translation factors.

Forms part of the ribosomal stalk which helps the ribosome interact with GTP-bound translation factors. Is thus essential for accurate translation. The polypeptide is Large ribosomal subunit protein bL12 (Mesomycoplasma hyopneumoniae (strain 7448) (Mycoplasma hyopneumoniae)).